Here is a 59-residue protein sequence, read N- to C-terminus: Large ribosomal subunit protein bL32 (59 aa).

The span at 1–15 (MANPKRKQSKRRSAN) shows a compositional bias: basic residues. The disordered stretch occupies residues 1 to 48 (MANPKRKQSKRRSANRRAANAFIAPEFAKDPTDGSAFRPHRVNPKNGM).

This sequence belongs to the bacterial ribosomal protein bL32 family.

In Opitutus terrae (strain DSM 11246 / JCM 15787 / PB90-1), this protein is Large ribosomal subunit protein bL32.